The chain runs to 64 residues: Prokaryotic ubiquitin-like protein Pup (64 aa).

The tract at residues 1-35 (MAQGGQVSAGGGRRDDDEPIEQTSGAGTQQVNVTG) is disordered. Positions 21–33 (EQTSGAGTQQVNV) are enriched in polar residues. Residues 21 to 58 (EQTSGAGTQQVNVTGTDDLLDEIDGLLENNAEEFVRSY) form an ARC ATPase binding region. At glutamine 64 the chain carries Deamidated glutamine. Glutamine 64 is covalently cross-linked (Isoglutamyl lysine isopeptide (Gln-Lys) (interchain with K-? in acceptor proteins)).

It belongs to the prokaryotic ubiquitin-like protein family. In terms of assembly, strongly interacts with the proteasome-associated ATPase ARC through a hydrophobic interface; the interacting region of Pup lies in its C-terminal half. There is one Pup binding site per ARC hexamer ring. Is modified by deamidation of its C-terminal glutamine to glutamate by the deamidase Dop, a prerequisite to the subsequent pupylation process.

It functions in the pathway protein degradation; proteasomal Pup-dependent pathway. Functionally, protein modifier that is covalently attached to lysine residues of substrate proteins, thereby targeting them for proteasomal degradation. The tagging system is termed pupylation. The protein is Prokaryotic ubiquitin-like protein Pup of Corynebacterium jeikeium (strain K411).